The chain runs to 495 residues: Steroid 21-hydroxylase (495 aa).

Arg-92 and Lys-121 together coordinate heme b. Arg-234 is a binding site for 17alpha-hydroxyprogesterone. Arg-234 is a binding site for progesterone. His-366, Arg-427, and Cys-429 together coordinate heme b.

This sequence belongs to the cytochrome P450 family. Heme b serves as cofactor.

The protein resides in the endoplasmic reticulum membrane. The protein localises to the microsome membrane. The enzyme catalyses progesterone + reduced [NADPH--hemoprotein reductase] + O2 = 21-hydroxyprogesterone + oxidized [NADPH--hemoprotein reductase] + H2O + H(+). The catalysed reaction is 17alpha-hydroxyprogesterone + reduced [NADPH--hemoprotein reductase] + O2 = 11-deoxycortisol + oxidized [NADPH--hemoprotein reductase] + H2O + H(+). Its function is as follows. A cytochrome P450 monooxygenase that plays a major role in adrenal steroidogenesis. Catalyzes the hydroxylation at C-21 of progesterone and 17alpha-hydroxyprogesterone to respectively form 11-deoxycorticosterone and 11-deoxycortisol, intermediate metabolites in the biosynthetic pathway of mineralocorticoids and glucocorticoids. Mechanistically, uses molecular oxygen inserting one oxygen atom into a substrate, and reducing the second into a water molecule, with two electrons provided by NADPH via cytochrome P450 reductase (CPR; NADPH-ferrihemoprotein reductase). The sequence is that of Steroid 21-hydroxylase (CYP21A2) from Homo sapiens (Human).